Reading from the N-terminus, the 382-residue chain is Putative acetyl-CoA C-acetyltransferase VraB (382 aa).

The Acyl-thioester intermediate role is filled by Cys-86. The active-site Proton acceptor is the His-338.

It belongs to the thiolase-like superfamily. Thiolase family.

The chain is Putative acetyl-CoA C-acetyltransferase VraB (vraB) from Staphylococcus epidermidis (strain ATCC 35984 / DSM 28319 / BCRC 17069 / CCUG 31568 / BM 3577 / RP62A).